We begin with the raw amino-acid sequence, 130 residues long: Small ribosomal subunit protein uS9 (130 aa).

The tract at residues 110–130 is disordered; it reads AKERKKYGRKGARARFQFSKR. Over residues 111 to 130 the composition is skewed to basic residues; that stretch reads KERKKYGRKGARARFQFSKR.

Belongs to the universal ribosomal protein uS9 family.

The polypeptide is Small ribosomal subunit protein uS9 (Syntrophotalea carbinolica (strain DSM 2380 / NBRC 103641 / GraBd1) (Pelobacter carbinolicus)).